The following is an 899-amino-acid chain: Valine--tRNA ligase (899 aa).

Positions 60 to 70 match the 'HIGH' region motif; the sequence is PNVTGVLHMGH. The 'KMSKS' region signature appears at 539 to 543; it reads KMSKS. Lys-542 serves as a coordination point for ATP. Residues 827–898 adopt a coiled-coil conformation; the sequence is AGLIDLDEEQ…KQGLEKLAAL (72 aa).

This sequence belongs to the class-I aminoacyl-tRNA synthetase family. ValS type 1 subfamily. As to quaternary structure, monomer.

It localises to the cytoplasm. It catalyses the reaction tRNA(Val) + L-valine + ATP = L-valyl-tRNA(Val) + AMP + diphosphate. Its function is as follows. Catalyzes the attachment of valine to tRNA(Val). As ValRS can inadvertently accommodate and process structurally similar amino acids such as threonine, to avoid such errors, it has a 'posttransfer' editing activity that hydrolyzes mischarged Thr-tRNA(Val) in a tRNA-dependent manner. The chain is Valine--tRNA ligase from Syntrophotalea carbinolica (strain DSM 2380 / NBRC 103641 / GraBd1) (Pelobacter carbinolicus).